Here is a 222-residue protein sequence, read N- to C-terminus: Proteoglycan 3 (222 aa).

A signal peptide spans M1–A17. A compositionally biased stretch (basic and acidic residues) spans N27–R46. Residues N27–Q100 are disordered. Acidic residues predominate over residues F71 to P81. Residues A83 to T97 are compositionally biased toward basic and acidic residues. The region spanning C105–S221 is the C-type lectin domain. Disulfide bonds link C126/C220 and C197/C212.

Expressed in bone marrow, spleen, and thymus. Not detected in heart, liver or lung.

Its function is as follows. Possesses similar cytotoxic and cytostimulatory activities to PRG2/MBP. The protein is Proteoglycan 3 of Mus musculus (Mouse).